Reading from the N-terminus, the 104-residue chain is UPF0145 protein GTNG_1265 (104 aa).

Belongs to the UPF0145 family.

This Geobacillus thermodenitrificans (strain NG80-2) protein is UPF0145 protein GTNG_1265.